The following is a 364-amino-acid chain: Envelope glycoprotein US27 (364 aa).

The Virion surface segment spans residues 1-36 (MTTSTTTTTNIMLQVSNVTNHTLNSTEIYQLFEYTR). N-linked (GlcNAc...) asparagine; by host glycans are attached at residues Asn-17, Asn-20, and Asn-24. The chain crosses the membrane as a helical span at residues 37–57 (FGVWLMCIVGTFLNMLVITTI). Over 58-69 (LYYRRKKKSPSD) the chain is Intravirion. Residues 70–90 (TYICNLAVADLLIVVGLPFFL) traverse the membrane as a helical segment. Topologically, residues 91–103 (EYAKHHPKLSREV) are virion surface. A helical membrane pass occupies residues 104 to 124 (VCSGLNACFYICLFAGVCFLI). Residues 125–150 (NLSMDRYCVIVWGVELNRVRNNKRAT) are Intravirion-facing. A helical membrane pass occupies residues 151 to 171 (CWVVIFWILAALMGMPHYLMY). Over 172–188 (SHTNNECVGEFANETSG) the chain is Virion surface. The helical transmembrane segment at 189-209 (WFPVFLNTKVNICGYLAPIVL) threads the bilayer. The Intravirion segment spans residues 210-234 (MAYTYNRMVRFIINYVGKWHMQTLH). The chain crosses the membrane as a helical span at residues 235 to 255 (VLLVVVVSFASFWFPFNLALF). Residues 256 to 279 (LESIRLLSGTQNETLQTVITFCLY) are Virion surface-facing. A helical membrane pass occupies residues 280–300 (VGQFLAYVRACLNPGIYILVG). The Intravirion portion of the chain corresponds to 301 to 364 (TQMRKDMWTT…MESGEEEFLL (64 aa)). The disordered stretch occupies residues 344-364 (KRTHYDRKHAPMESGEEEFLL).

Belongs to the G-protein coupled receptor 1 family. As to quaternary structure, heterodimerizes with US28.

The protein localises to the virion. It is found in the host cell membrane. In terms of biological role, plays an important role in spread of HCMV via the extracellular route. As a G-protein-coupled receptor (vGPCR), may activate signaling pathways important for virion assembly or egress processes. The chain is Envelope glycoprotein US27 (US27) from Homo sapiens (Human).